The following is a 359-amino-acid chain: 4-hydroxy-3-methylbut-2-en-1-yl diphosphate synthase (flavodoxin) (359 aa).

The [4Fe-4S] cluster site is built by C264, C267, C299, and E306.

Belongs to the IspG family. The cofactor is [4Fe-4S] cluster.

It carries out the reaction (2E)-4-hydroxy-3-methylbut-2-enyl diphosphate + oxidized [flavodoxin] + H2O + 2 H(+) = 2-C-methyl-D-erythritol 2,4-cyclic diphosphate + reduced [flavodoxin]. It functions in the pathway isoprenoid biosynthesis; isopentenyl diphosphate biosynthesis via DXP pathway; isopentenyl diphosphate from 1-deoxy-D-xylulose 5-phosphate: step 5/6. Converts 2C-methyl-D-erythritol 2,4-cyclodiphosphate (ME-2,4cPP) into 1-hydroxy-2-methyl-2-(E)-butenyl 4-diphosphate. In Helicobacter pylori (strain Shi470), this protein is 4-hydroxy-3-methylbut-2-en-1-yl diphosphate synthase (flavodoxin).